A 77-amino-acid chain; its full sequence is MAENKQNLQDAFLNHVRKTKVPVTIFLINGVKLQGVITWFDNFCVLLRRDGQSQLVYKHAISTVMPAQPISLYDGEE.

The 61-residue stretch at 10 to 70 (DAFLNHVRKT…ISTVMPAQPI (61 aa)) folds into the Sm domain.

This sequence belongs to the Hfq family. As to quaternary structure, homohexamer.

Its function is as follows. RNA chaperone that binds small regulatory RNA (sRNAs) and mRNAs to facilitate mRNA translational regulation in response to envelope stress, environmental stress and changes in metabolite concentrations. Also binds with high specificity to tRNAs. This is RNA-binding protein Hfq from Jannaschia sp. (strain CCS1).